Here is a 612-residue protein sequence, read N- to C-terminus: Bifunctional 6(G)-fructosyltransferase/2,1-fructan:2,1-fructan 1-fructosyltransferase (612 aa).

Residues 1–24 are Cytoplasmic-facing; sequence MDAQDIESRHPLIGARPRRRALRS. The chain crosses the membrane as a helical; Signal-anchor for type II membrane protein span at residues 25 to 45; sequence LSILLAAALLLGLVLFYANGT. The Vacuolar portion of the chain corresponds to 46-612; sequence GSGTAVDPVR…NSTYNDFYHF (567 aa). Residues 82-85, Gln101, and Trp109 contribute to the substrate site; that span reads YMND. The active site involves Asp85. Residue Asn111 is glycosylated (N-linked (GlcNAc...) asparagine). Residues 144 to 145 and 208 to 209 each bind substrate; these read WT and RD. Residues Asn216 and Asn230 are each glycosylated (N-linked (GlcNAc...) asparagine). Glu267 lines the substrate pocket. Asn465 carries an N-linked (GlcNAc...) asparagine glycan. Cys466 and Cys514 are oxidised to a cystine. Asn586 and Asn603 each carry an N-linked (GlcNAc...) asparagine glycan.

It belongs to the glycosyl hydrolase 32 family. Might be processed in two N-terminal and C-terminal proteolytic fragments.

It is found in the vacuole membrane. The catalysed reaction is [1-beta-D-fructofuranosyl-(2-&gt;1)-]m+1 alpha-D-glucopyranoside + [1-beta-D-fructofuranosyl-(2-&gt;1)-]n+1 alpha-D-glucopyranoside = [1-beta-D-fructofuranosyl-(2-&gt;1)-]m alpha-D-glucopyranoside + [1-beta-D-fructofuranosyl-(2-&gt;1)-]n+1 beta-D-fructofuranosyl-(2-&gt;6)-alpha-D-glucopyranoside (m &gt; 0, n &gt;= 0).. It carries out the reaction [beta-D-fructosyl-(2-&gt;1)-]m + [beta-D-fructosyl-(2-&gt;1)-]n = [beta-D-fructosyl-(2-&gt;1)-]m-1 + [beta-D-fructosyl-(2-&gt;1)-]n+1.. In terms of biological role, involved in the synthesis of fructan of the inulin neoseries. Catalyzes a self-transfer between identical oligosaccharides of the 1-kestose series. In Allium cepa (Onion), this protein is Bifunctional 6(G)-fructosyltransferase/2,1-fructan:2,1-fructan 1-fructosyltransferase.